Reading from the N-terminus, the 137-residue chain is Methylglyoxal synthase (137 aa).

The 137-residue stretch at 1–137 (MNIALVAHDK…KLSHNDEPPA (137 aa)) folds into the MGS-like domain. Substrate-binding positions include His-8, Lys-12, 34 to 37 (TGTT), and 54 to 55 (SG). Residue Asp-60 is the Proton donor/acceptor of the active site. Substrate is bound at residue His-87.

The protein belongs to the methylglyoxal synthase family.

The enzyme catalyses dihydroxyacetone phosphate = methylglyoxal + phosphate. Its function is as follows. Catalyzes the formation of methylglyoxal from dihydroxyacetone phosphate. This is Methylglyoxal synthase from Exiguobacterium sp. (strain ATCC BAA-1283 / AT1b).